The primary structure comprises 581 residues: Arginine--tRNA ligase (581 aa).

Positions 122–132 (PNVAKPMHVGH) match the 'HIGH' region motif.

It belongs to the class-I aminoacyl-tRNA synthetase family. Monomer.

It localises to the cytoplasm. The enzyme catalyses tRNA(Arg) + L-arginine + ATP = L-arginyl-tRNA(Arg) + AMP + diphosphate. The chain is Arginine--tRNA ligase from Francisella tularensis subsp. holarctica (strain FTNF002-00 / FTA).